The primary structure comprises 709 residues: Glycerol kinase (709 aa).

Thr56 contacts substrate. An ATP-binding site is contributed by Arg60. Residues 86–110 (KIGVSGLRRPSTAPARETPNAGDIK) are disordered. 3 residues coordinate substrate: Arg201, Tyr258, and Asp386. ATP-binding positions include Thr408, Gly463, and 584 to 588 (GMSRS).

Belongs to the FGGY kinase family.

It carries out the reaction glycerol + ATP = sn-glycerol 3-phosphate + ADP + H(+). The protein operates within polyol metabolism; glycerol degradation via glycerol kinase pathway; sn-glycerol 3-phosphate from glycerol: step 1/1. Functionally, key enzyme in the regulation of glycerol uptake and metabolism. Catalyzes the phosphorylation of glycerol to yield sn-glycerol 3-phosphate. The polypeptide is Glycerol kinase (GUT1) (Saccharomyces cerevisiae (strain ATCC 204508 / S288c) (Baker's yeast)).